Consider the following 628-residue polypeptide: MAKVRILSDRVANQIAAGEVIERPAAVVKELVENALDAGATRIEVEFRHGGRSLMRVEDNGSGMSRDDALLALERHATSKISEAADLDRLGSYGFRGEALPSIASVSRFELQTREAGQNVGTEVLVSGGKLVHVRDCGRPVGTRIEVAQLFNSVPARRKFLKSDQTEAAHIVQCVRLYALACPGTAFSLIEDGRVIFRSPECPTLAERIAEIFGRQTAESLVPIESVESGMRLGGLIGRPGVGRGTRHEMIVFVNQRPVDSRTLNYALIESYYESVPKGRYPLAFVFFECDPAAVDVNVHPAKREVRFRNEPAVRSFVIRSVLQRLREIADHRSDFAQPSADNMPKPESPGAPAAHGRKDDAPAAHAEGRAATPLAAGNLIVTARFGAESTPYLEKSGAIAGARPAGVLPPAVPRIPAAPMPVNAGAAAVPAPLKPASPSWRFVGLAHGNYALFETTAGLILLDRRAAHERVWFERLQEQFRSGAVPSQRLLLPVPVELDPIAAALLLDRVQFLNAHGFEIAEFGRNFFRIEAVPAWMEPADAEPFLRDLLGAFREGHWPDRDANLAREELARLASVKAVRLPAVTGEQELRALVTHLFATRTPMTNPAGRPTYIELNHAELARRFQK.

The interval 334 to 367 (SDFAQPSADNMPKPESPGAPAAHGRKDDAPAAHA) is disordered. The segment covering 357–367 (GRKDDAPAAHA) has biased composition (basic and acidic residues).

Belongs to the DNA mismatch repair MutL/HexB family.

This protein is involved in the repair of mismatches in DNA. It is required for dam-dependent methyl-directed DNA mismatch repair. May act as a 'molecular matchmaker', a protein that promotes the formation of a stable complex between two or more DNA-binding proteins in an ATP-dependent manner without itself being part of a final effector complex. The sequence is that of DNA mismatch repair protein MutL from Opitutus terrae (strain DSM 11246 / JCM 15787 / PB90-1).